Consider the following 168-residue polypeptide: N-alpha-acetyltransferase (168 aa).

Residues 13–168 (YQIRLATLSD…EDAYLMAAPL (156 aa)) enclose the N-acetyltransferase domain. Residue Tyr38 participates in substrate binding. His89 is a Zn(2+) binding site. Acetyl-CoA is bound by residues 93–95 (IAV) and 101–106 (KIGVGT). CoA contacts are provided by residues 93-95 (IAV) and 101-106 (KIGVGT). Residue Glu128 participates in Zn(2+) binding. Residues Asn133 and 140–142 (YKK) each bind acetyl-CoA. Asn133 is a binding site for CoA. Tyr155 provides a ligand contact to substrate.

Belongs to the acetyltransferase family. ARD1 subfamily. As to quaternary structure, homodimer.

The protein resides in the cytoplasm. The enzyme catalyses N-terminal L-alanyl-[protein] + acetyl-CoA = N-terminal N(alpha)-acetyl-L-alanyl-[protein] + CoA + H(+). It catalyses the reaction N-terminal L-seryl-[protein] + acetyl-CoA = N-terminal N(alpha)-acetyl-L-seryl-[protein] + CoA + H(+). The catalysed reaction is N-terminal L-methionyl-L-leucyl-[protein] + acetyl-CoA = N-terminal N(alpha)-acetyl-L-methionyl-L-leucyl-[protein] + CoA + H(+). It carries out the reaction N-terminal L-methionyl-L-glutamyl-[protein] + acetyl-CoA = N-terminal N(alpha)-acetyl-L-methionyl-L-glutamyl-[protein] + CoA + H(+). Displays alpha (N-terminal) acetyltransferase activity. Catalyzes the covalent attachment of an acetyl moiety from acetyl-CoA to the free alpha-amino group at the N-terminus of a protein. This is N-alpha-acetyltransferase from Sulfolobus acidocaldarius (strain ATCC 33909 / DSM 639 / JCM 8929 / NBRC 15157 / NCIMB 11770).